The sequence spans 426 residues: Serine--tRNA ligase (426 aa).

An L-serine-binding site is contributed by 233-235; that stretch reads TAE. Residue 264 to 266 coordinates ATP; the sequence is RAE. E287 provides a ligand contact to L-serine. 351 to 354 contributes to the ATP binding site; sequence EISS. S387 contributes to the L-serine binding site.

It belongs to the class-II aminoacyl-tRNA synthetase family. Type-1 seryl-tRNA synthetase subfamily. As to quaternary structure, homodimer. The tRNA molecule binds across the dimer.

The protein localises to the cytoplasm. The catalysed reaction is tRNA(Ser) + L-serine + ATP = L-seryl-tRNA(Ser) + AMP + diphosphate + H(+). It catalyses the reaction tRNA(Sec) + L-serine + ATP = L-seryl-tRNA(Sec) + AMP + diphosphate + H(+). It functions in the pathway aminoacyl-tRNA biosynthesis; selenocysteinyl-tRNA(Sec) biosynthesis; L-seryl-tRNA(Sec) from L-serine and tRNA(Sec): step 1/1. Its function is as follows. Catalyzes the attachment of serine to tRNA(Ser). Is also able to aminoacylate tRNA(Sec) with serine, to form the misacylated tRNA L-seryl-tRNA(Sec), which will be further converted into selenocysteinyl-tRNA(Sec). In Clostridium novyi (strain NT), this protein is Serine--tRNA ligase.